We begin with the raw amino-acid sequence, 256 residues long: Thiazole synthase (256 aa).

The active-site Schiff-base intermediate with DXP is the lysine 95. Residues glycine 156, 182–183, and 204–205 each bind 1-deoxy-D-xylulose 5-phosphate; these read AG and NT.

Belongs to the ThiG family. As to quaternary structure, homotetramer. Forms heterodimers with either ThiH or ThiS.

The protein localises to the cytoplasm. It carries out the reaction [ThiS sulfur-carrier protein]-C-terminal-Gly-aminoethanethioate + 2-iminoacetate + 1-deoxy-D-xylulose 5-phosphate = [ThiS sulfur-carrier protein]-C-terminal Gly-Gly + 2-[(2R,5Z)-2-carboxy-4-methylthiazol-5(2H)-ylidene]ethyl phosphate + 2 H2O + H(+). It functions in the pathway cofactor biosynthesis; thiamine diphosphate biosynthesis. Its function is as follows. Catalyzes the rearrangement of 1-deoxy-D-xylulose 5-phosphate (DXP) to produce the thiazole phosphate moiety of thiamine. Sulfur is provided by the thiocarboxylate moiety of the carrier protein ThiS. In vitro, sulfur can be provided by H(2)S. The sequence is that of Thiazole synthase from Shigella boydii serotype 18 (strain CDC 3083-94 / BS512).